Reading from the N-terminus, the 853-residue chain is DNA mismatch repair protein MutS (853 aa).

613-620 (GPNMGGKS) contributes to the ATP binding site.

Belongs to the DNA mismatch repair MutS family.

Functionally, this protein is involved in the repair of mismatches in DNA. It is possible that it carries out the mismatch recognition step. This protein has a weak ATPase activity. This Vibrio atlanticus (strain LGP32) (Vibrio splendidus (strain Mel32)) protein is DNA mismatch repair protein MutS.